A 345-amino-acid polypeptide reads, in one-letter code: Phosphate acyltransferase (345 aa).

Belongs to the PlsX family. As to quaternary structure, homodimer. Probably interacts with PlsY.

The protein localises to the cytoplasm. It catalyses the reaction a fatty acyl-[ACP] + phosphate = an acyl phosphate + holo-[ACP]. The protein operates within lipid metabolism; phospholipid metabolism. Functionally, catalyzes the reversible formation of acyl-phosphate (acyl-PO(4)) from acyl-[acyl-carrier-protein] (acyl-ACP). This enzyme utilizes acyl-ACP as fatty acyl donor, but not acyl-CoA. This chain is Phosphate acyltransferase, found in Trichlorobacter lovleyi (strain ATCC BAA-1151 / DSM 17278 / SZ) (Geobacter lovleyi).